The sequence spans 236 residues: MSYNLTDPYEIARYIKEAKKSTPIKAYIEGDLSNCDFTNIEKFNSGDLYILFGESEEILVIIEKNKDKIKNCRIEQDRRKSAIPLLDMLKINARIEPGATIRDKVIIGENAVIMMGAVINIGAEIGEGTMVDMNAVVGARGKLGKNVHLGAGAVVAGVLEPPSSDPCTIEDNVLIGANAVILEGIKIGKGSVVAAGSIVTTDVPENVVVAGAPAKIIKEVDVKTKDKTKLLDDLRK.

The protein belongs to the transferase hexapeptide repeat family. DapH subfamily.

It carries out the reaction (S)-2,3,4,5-tetrahydrodipicolinate + acetyl-CoA + H2O = L-2-acetamido-6-oxoheptanedioate + CoA. The protein operates within amino-acid biosynthesis; L-lysine biosynthesis via DAP pathway; LL-2,6-diaminopimelate from (S)-tetrahydrodipicolinate (acetylase route): step 1/3. In terms of biological role, catalyzes the transfer of an acetyl group from acetyl-CoA to tetrahydrodipicolinate. The sequence is that of 2,3,4,5-tetrahydropyridine-2,6-dicarboxylate N-acetyltransferase from Clostridium botulinum (strain 657 / Type Ba4).